Reading from the N-terminus, the 311-residue chain is Malate dehydrogenase (311 aa).

NAD(+) is bound by residues 7-13 (GAAGGIG) and Asp-34. Residues Arg-81 and Arg-87 each contribute to the substrate site. Residues Asn-94 and 117 to 119 (ITN) each bind NAD(+). Residues Asn-119 and Arg-153 each coordinate substrate. Residue His-177 is the Proton acceptor of the active site. Met-227 serves as a coordination point for NAD(+).

The protein belongs to the LDH/MDH superfamily. MDH type 1 family. In terms of assembly, homodimer.

It carries out the reaction (S)-malate + NAD(+) = oxaloacetate + NADH + H(+). Catalyzes the reversible oxidation of malate to oxaloacetate. The polypeptide is Malate dehydrogenase (Shewanella sp. (strain MR-4)).